A 75-amino-acid chain; its full sequence is Small ribosomal subunit protein bS18 (75 aa).

Belongs to the bacterial ribosomal protein bS18 family. In terms of assembly, part of the 30S ribosomal subunit. Forms a tight heterodimer with protein bS6.

In terms of biological role, binds as a heterodimer with protein bS6 to the central domain of the 16S rRNA, where it helps stabilize the platform of the 30S subunit. This is Small ribosomal subunit protein bS18 from Saccharophagus degradans (strain 2-40 / ATCC 43961 / DSM 17024).